The following is a 131-amino-acid chain: Thrombocorticin (131 aa).

The cysteines at positions 3 and 111 are disulfide-linked. The interval 28–60 (RNESVEVKDSNGNTVSRGSGSSSSGGTFTVINM) is disordered. Residues 37-54 (SNGNTVSRGSGSSSSGGT) are compositionally biased toward low complexity. The Pseudodomain-swapping motif motif lies at 117–131 (DFNDVFVLITGLVRG).

In terms of biological role, binds to fucose and mannose in a calcium-dependent manner (in vitro). Acts as an agonist for human thrombopoietin receptor MPL (in vitro). Binding of sugar-moieties may promote the interaction with human MPL on the cell surface (in vitro). Catalyzes MPL dimerization and activation, and modulates internalization of the receptor (in vitro). Exhibits proliferation activity in murine recombinant Ba/F3 cells expressing human MPL (Ba/F3-huMPL) (in vitro). Induces phosphorylation of STAT5 in recombinant Ba/F3-huMPL cells, possibly by stimulating MPL on the cell surface to transduce signals via Jak/STAT signaling pathway (in vitro). Does not aggregate rabbit erythrocytes, indicating absent lectin-like agglutination activity (in vitro). The chain is Thrombocorticin from Corticium sp. (Marine sponge).